The chain runs to 175 residues: Large ribosomal subunit protein uL10 (175 aa).

The protein belongs to the universal ribosomal protein uL10 family. Part of the ribosomal stalk of the 50S ribosomal subunit. The N-terminus interacts with L11 and the large rRNA to form the base of the stalk. The C-terminus forms an elongated spine to which L12 dimers bind in a sequential fashion forming a multimeric L10(L12)X complex.

Functionally, forms part of the ribosomal stalk, playing a central role in the interaction of the ribosome with GTP-bound translation factors. In Prochlorococcus marinus (strain MIT 9515), this protein is Large ribosomal subunit protein uL10.